Reading from the N-terminus, the 118-residue chain is Large ribosomal subunit protein uL18 (118 aa).

It belongs to the universal ribosomal protein uL18 family. Part of the 50S ribosomal subunit; part of the 5S rRNA/L5/L18/L25 subcomplex. Contacts the 5S and 23S rRNAs.

Its function is as follows. This is one of the proteins that bind and probably mediate the attachment of the 5S RNA into the large ribosomal subunit, where it forms part of the central protuberance. This chain is Large ribosomal subunit protein uL18, found in Mycoplasmopsis pulmonis (strain UAB CTIP) (Mycoplasma pulmonis).